The following is a 197-amino-acid chain: Probable chemoreceptor glutamine deamidase CheD 2 (197 aa).

The protein belongs to the CheD family.

The catalysed reaction is L-glutaminyl-[protein] + H2O = L-glutamyl-[protein] + NH4(+). Probably deamidates glutamine residues to glutamate on methyl-accepting chemotaxis receptors (MCPs), playing an important role in chemotaxis. The sequence is that of Probable chemoreceptor glutamine deamidase CheD 2 from Dechloromonas aromatica (strain RCB).